The sequence spans 367 residues: bZIP transcription factor 18 (367 aa).

The interval 1 to 57 (MEDPSNPQPNQSNLSQCPPLATAPTPAPVRGPYHRRAHSEVQFRLPEDLDLSEPFGG) is disordered. The segment covering 38–47 (HSEVQFRLPE) has biased composition (basic and acidic residues). Serine 70 carries the post-translational modification Phosphoserine. The segment at 79 to 124 (SGSGSASDSAGPSAPRSDNPFSAENGGAEAGNSRPRHRHSLSVDGS) is disordered. Residues 82–96 (GSASDSAGPSAPRSD) show a composition bias toward low complexity. The 64-residue stretch at 148–211 (DPKRAKRIIA…TGLSSENTEL (64 aa)) folds into the bZIP domain. Positions 150–171 (KRAKRIIANRQSAARSKERKAR) are basic motif. A coiled-coil region spans residues 166–245 (KERKARYILE…VERLKFATGE (80 aa)). The interval 176 to 190 (LERKVQTLQTEATTL) is leucine-zipper. Polar residues-rich tracts occupy residues 294-309 (QPNNNQNQSSRTNPPT), 317-328 (ATSNAPAQSHSY), and 354-367 (FGRSDTVSESSSTM). Disordered stretches follow at residues 294–330 (QPNNNQNQSSRTNPPTAHQLMHHATSNAPAQSHSYSE) and 343–367 (LDISSCGRGSNFGRSDTVSESSSTM).

Interacts with NEAP1. Forms homodimer and heterodimer with bZIP34 and bZIP61. Ubiquitous. Strongly expressed in mature pollen.

The protein resides in the nucleus. It is found in the nucleoplasm. Its subcellular location is the cytoplasm. It localises to the perinuclear region. Transcription factor that may participate with bZIP34 in the gametophytic control of pollen development. This Arabidopsis thaliana (Mouse-ear cress) protein is bZIP transcription factor 18.